Here is a 125-residue protein sequence, read N- to C-terminus: Ribosome-binding factor A (125 aa).

The protein belongs to the RbfA family. As to quaternary structure, monomer. Binds 30S ribosomal subunits, but not 50S ribosomal subunits or 70S ribosomes.

It is found in the cytoplasm. Functionally, one of several proteins that assist in the late maturation steps of the functional core of the 30S ribosomal subunit. Associates with free 30S ribosomal subunits (but not with 30S subunits that are part of 70S ribosomes or polysomes). Required for efficient processing of 16S rRNA. May interact with the 5'-terminal helix region of 16S rRNA. This is Ribosome-binding factor A from Xylella fastidiosa (strain 9a5c).